The following is a 59-amino-acid chain: Large ribosomal subunit protein bL32 (59 aa).

It belongs to the bacterial ribosomal protein bL32 family.

This Synechococcus sp. (strain JA-2-3B'a(2-13)) (Cyanobacteria bacterium Yellowstone B-Prime) protein is Large ribosomal subunit protein bL32.